A 572-amino-acid chain; its full sequence is Phosphoenolpyruvate-protein phosphotransferase (572 aa).

The active-site Tele-phosphohistidine intermediate is the His190. Positions 297 and 333 each coordinate phosphoenolpyruvate. 2 residues coordinate Mg(2+): Glu427 and Asp451. Residues Asn450 to Asp451 and Arg461 each bind phosphoenolpyruvate. Residue Cys498 is the Proton donor of the active site.

Belongs to the PEP-utilizing enzyme family. Homodimer. Mg(2+) serves as cofactor.

It localises to the cytoplasm. It catalyses the reaction L-histidyl-[protein] + phosphoenolpyruvate = N(pros)-phospho-L-histidyl-[protein] + pyruvate. In terms of biological role, general (non sugar-specific) component of the phosphoenolpyruvate-dependent sugar phosphotransferase system (sugar PTS). This major carbohydrate active-transport system catalyzes the phosphorylation of incoming sugar substrates concomitantly with their translocation across the cell membrane. Enzyme I transfers the phosphoryl group from phosphoenolpyruvate (PEP) to the phosphoryl carrier protein (HPr). The polypeptide is Phosphoenolpyruvate-protein phosphotransferase (ptsI) (Mycoplasma pneumoniae (strain ATCC 29342 / M129 / Subtype 1) (Mycoplasmoides pneumoniae)).